A 599-amino-acid chain; its full sequence is Elongation factor 4 (599 aa).

The tr-type G domain maps to 5–187 (KNIRNFSIIA…QLVERIPAPE (183 aa)). GTP-binding positions include 17–22 (DHGKST) and 134–137 (NKID).

The protein belongs to the TRAFAC class translation factor GTPase superfamily. Classic translation factor GTPase family. LepA subfamily.

The protein localises to the cell inner membrane. It carries out the reaction GTP + H2O = GDP + phosphate + H(+). Its function is as follows. Required for accurate and efficient protein synthesis under certain stress conditions. May act as a fidelity factor of the translation reaction, by catalyzing a one-codon backward translocation of tRNAs on improperly translocated ribosomes. Back-translocation proceeds from a post-translocation (POST) complex to a pre-translocation (PRE) complex, thus giving elongation factor G a second chance to translocate the tRNAs correctly. Binds to ribosomes in a GTP-dependent manner. This is Elongation factor 4 from Alcanivorax borkumensis (strain ATCC 700651 / DSM 11573 / NCIMB 13689 / SK2).